Consider the following 280-residue polypeptide: Ycf3-interacting protein 1, chloroplastic (280 aa).

A chloroplast-targeting transit peptide spans 1-62; the sequence is MTTQIFQLPL…NNRRFGSLIV (62 aa). The tract at residues 75–103 is disordered; that stretch reads PVPLTLEQQEKEKQNRDDEEDEIDEGDVD. The span at 91-103 shows a compositional bias: acidic residues; the sequence is DDEEDEIDEGDVD. Residues 255–275 traverse the membrane as a helical segment; the sequence is ALYFVSALPVIIGISVVLILF.

Belongs to the Y3IP1/CEST family. In terms of assembly, interacts with Ycf3. In terms of tissue distribution, expressed in cotyledons, rosette and cauline leaves, stems and sepals.

It localises to the plastid. Its subcellular location is the chloroplast thylakoid membrane. In terms of biological role, nuclear genome-encoded factor that participates in photosystem I (PSI) biogenesis. Cooperates with the plastid genome-encoded protein PSI assembly Ycf3 in the assembly of stable PSI units in the thylakoid membrane. Involved in light-induced chloroplast development and growth. Involved in the plant response to abiotic and photooxidative stresses. May be involved in the suppression of photooxidative damage. The chain is Ycf3-interacting protein 1, chloroplastic from Arabidopsis thaliana (Mouse-ear cress).